We begin with the raw amino-acid sequence, 607 residues long: TOM1-like protein 8 (607 aa).

The 130-residue stretch at Ala-9 to Pro-138 folds into the VHS domain. Residues Pro-141–Glu-175 form a disordered region. Residues Glu-175–Ser-263 enclose the GAT domain. The residue at position 297 (Ser-297) is a Phosphoserine. A compositionally biased stretch (polar residues) spans Asn-355–Asn-379. Disordered stretches follow at residues Asn-355–Gln-393, Gln-407–His-460, and Asp-555–Pro-582. The residue at position 410 (Ser-410) is a Phosphoserine. Residues Gln-448–His-460 are compositionally biased toward low complexity. Over residues Asp-555–His-569 the composition is skewed to polar residues.

This sequence belongs to the TOM1 family. As to expression, specifically expressed in siliques and flowers.

The protein localises to the membrane. Might contribute to the loading of the ESCRT machinery. The chain is TOM1-like protein 8 from Arabidopsis thaliana (Mouse-ear cress).